We begin with the raw amino-acid sequence, 293 residues long: NAD kinase (293 aa).

Residue D72 is the Proton acceptor of the active site. Residues 72 to 73 (DG), 146 to 147 (ND), R157, R174, D176, 187 to 192 (TAYALS), and Q247 each bind NAD(+).

Belongs to the NAD kinase family. Requires a divalent metal cation as cofactor.

It localises to the cytoplasm. It catalyses the reaction NAD(+) + ATP = ADP + NADP(+) + H(+). In terms of biological role, involved in the regulation of the intracellular balance of NAD and NADP, and is a key enzyme in the biosynthesis of NADP. Catalyzes specifically the phosphorylation on 2'-hydroxyl of the adenosine moiety of NAD to yield NADP. The polypeptide is NAD kinase (Chromohalobacter salexigens (strain ATCC BAA-138 / DSM 3043 / CIP 106854 / NCIMB 13768 / 1H11)).